We begin with the raw amino-acid sequence, 441 residues long: Chitinase-like protein Idgf3 (441 aa).

An N-terminal signal peptide occupies residues 1–23; sequence MTGSLWLSLALSLAVLAQFKVSA. Residues 25-441 enclose the GH18 domain; the sequence is PNLVCFYDSQ…MLRAIKYRLL (417 aa). Cysteines 29 and 56 form a disulfide. An N-linked (GlcNAc...) asparagine glycan is attached at N221. Residues 307–331 form a disordered region; the sequence is KDSGDSGMPVVPSTQGPAPAGPQSK. C342 and C425 form a disulfide bridge.

Belongs to the glycosyl hydrolase 18 family. IDGF subfamily. In terms of processing, glycosylated. As to expression, primarily expressed in yolk cells and fat body. In larvae, it is expressed in small and large salivary gland cells, and weakly expressed in imaginal disks. Less expressed than Idgf2 and Idgf4.

The protein localises to the secreted. In terms of biological role, cooperates with insulin-like peptides to stimulate the proliferation, polarization and motility of imaginal disk cells. May act by stabilizing the binding of insulin-like peptides to its receptor through a simultaneous interaction with both molecules to form a multiprotein signaling complex. This is Chitinase-like protein Idgf3 (Idgf3) from Drosophila melanogaster (Fruit fly).